The sequence spans 481 residues: Glutamyl-tRNA(Gln) amidotransferase subunit A (481 aa).

Residues Lys76 and Ser151 each act as charge relay system in the active site. Ser175 serves as the catalytic Acyl-ester intermediate.

The protein belongs to the amidase family. GatA subfamily. Heterotrimer of A, B and C subunits.

It catalyses the reaction L-glutamyl-tRNA(Gln) + L-glutamine + ATP + H2O = L-glutaminyl-tRNA(Gln) + L-glutamate + ADP + phosphate + H(+). Functionally, allows the formation of correctly charged Gln-tRNA(Gln) through the transamidation of misacylated Glu-tRNA(Gln) in organisms which lack glutaminyl-tRNA synthetase. The reaction takes place in the presence of glutamine and ATP through an activated gamma-phospho-Glu-tRNA(Gln). The polypeptide is Glutamyl-tRNA(Gln) amidotransferase subunit A (Neisseria meningitidis serogroup C / serotype 2a (strain ATCC 700532 / DSM 15464 / FAM18)).